We begin with the raw amino-acid sequence, 704 residues long: Elongation factor G (704 aa).

Positions 6–282 (NKVRNIGIMA…AVIDYLPTPL (277 aa)) constitute a tr-type G domain. Residues 15–22 (AHIDAGKT), 79–83 (DTPGH), and 133–136 (NKMD) contribute to the GTP site.

Belongs to the TRAFAC class translation factor GTPase superfamily. Classic translation factor GTPase family. EF-G/EF-2 subfamily.

Its subcellular location is the cytoplasm. Its function is as follows. Catalyzes the GTP-dependent ribosomal translocation step during translation elongation. During this step, the ribosome changes from the pre-translocational (PRE) to the post-translocational (POST) state as the newly formed A-site-bound peptidyl-tRNA and P-site-bound deacylated tRNA move to the P and E sites, respectively. Catalyzes the coordinated movement of the two tRNA molecules, the mRNA and conformational changes in the ribosome. This Corynebacterium diphtheriae (strain ATCC 700971 / NCTC 13129 / Biotype gravis) protein is Elongation factor G.